Consider the following 176-residue polypeptide: Peptidyl-prolyl cis-trans isomerase CYP19-3 (176 aa).

Positions 7–170 (FFDILIGKMK…ERVVIEDCGE (164 aa)) constitute a PPIase cyclophilin-type domain.

This sequence belongs to the cyclophilin-type PPIase family. As to expression, ubiquitous, with highest levels in flowers and lowest levels in roots.

It localises to the cytoplasm. It carries out the reaction [protein]-peptidylproline (omega=180) = [protein]-peptidylproline (omega=0). Its activity is regulated as follows. Binds cyclosporin A (CsA). CsA mediates some of its effects via an inhibitory action on PPIase. PPIases accelerate the folding of proteins. It catalyzes the cis-trans isomerization of proline imidic peptide bonds in oligopeptides. This is Peptidyl-prolyl cis-trans isomerase CYP19-3 (CYP19-3) from Arabidopsis thaliana (Mouse-ear cress).